The following is a 149-amino-acid chain: Large ribosomal subunit protein bL9 (149 aa).

The protein belongs to the bacterial ribosomal protein bL9 family.

Binds to the 23S rRNA. The sequence is that of Large ribosomal subunit protein bL9 from Glaesserella parasuis serovar 5 (strain SH0165) (Haemophilus parasuis).